Consider the following 4243-residue polypeptide: Fibrocystin-L (4243 aa).

The first 20 residues, M1–A20, serve as a signal peptide directing secretion. Residues D21 to Q4210 are Extracellular-facing. IPT/TIG domains are found at residues P31–G129, P146–Y255, and A270–Y361. O-linked (GalNAc...) threonine glycosylation occurs at T122. The PA14 domain maps to P337 to D492. T445 carries O-linked (GalNAc...) threonine glycosylation. 11 consecutive IPT/TIG domains span residues P1067–F1151, S1155–Y1234, P1240–L1322, L1330–Y1469, P1566–N1649, P1659–Y1743, P1749–V1828, P1831–Y1910, P1916–Y1997, L1999–Y2085, and P2091–Y2176. T1803 and T1839 each carry an O-linked (GalNAc...) threonine glycan. One can recognise a G8 1 domain in the interval F2184–H2304. A glycan (O-linked (GalNAc...) threonine) is linked at T2320. PbH1 repeat units follow at residues T2508–D2530, N2566–M2588, G2665–R2687, and S2733–V2756. The G8 2 domain occupies S3036 to E3174. PbH1 repeat units lie at residues K3293–T3315, T3355–G3377, G3416–G3438, P3471–T3493, and S3527–D3548. An O-linked (GalNAc...) threonine glycan is attached at T3736. The chain crosses the membrane as a helical span at residues I4211 to A4231. Residues A4232 to Y4243 lie on the Cytoplasmic side of the membrane.

It is found in the membrane. The protein resides in the cell projection. The protein localises to the stereocilium membrane. Its function is as follows. Component of hair-cell stereocilia coat. Required for normal hearing. The chain is Fibrocystin-L (PKHD1L1) from Homo sapiens (Human).